Reading from the N-terminus, the 502-residue chain is Lysine--tRNA ligase (502 aa).

Mg(2+) is bound by residues glutamate 411 and glutamate 418.

This sequence belongs to the class-II aminoacyl-tRNA synthetase family. In terms of assembly, homodimer. Mg(2+) serves as cofactor.

Its subcellular location is the cytoplasm. The enzyme catalyses tRNA(Lys) + L-lysine + ATP = L-lysyl-tRNA(Lys) + AMP + diphosphate. This is Lysine--tRNA ligase from Chromohalobacter salexigens (strain ATCC BAA-138 / DSM 3043 / CIP 106854 / NCIMB 13768 / 1H11).